A 235-amino-acid chain; its full sequence is NADH-quinone oxidoreductase subunit C (235 aa).

The protein belongs to the complex I 30 kDa subunit family. As to quaternary structure, NDH-1 is composed of 14 different subunits. Subunits NuoB, C, D, E, F, and G constitute the peripheral sector of the complex.

It is found in the cell membrane. The catalysed reaction is a quinone + NADH + 5 H(+)(in) = a quinol + NAD(+) + 4 H(+)(out). Functionally, NDH-1 shuttles electrons from NADH, via FMN and iron-sulfur (Fe-S) centers, to quinones in the respiratory chain. The immediate electron acceptor for the enzyme in this species is believed to be a menaquinone. Couples the redox reaction to proton translocation (for every two electrons transferred, four hydrogen ions are translocated across the cytoplasmic membrane), and thus conserves the redox energy in a proton gradient. In Mycolicibacterium paratuberculosis (strain ATCC BAA-968 / K-10) (Mycobacterium paratuberculosis), this protein is NADH-quinone oxidoreductase subunit C.